We begin with the raw amino-acid sequence, 336 residues long: Melanoma-associated antigen B17 (336 aa).

The span at 1–17 (MPRGQASKRRAREKRRQ) shows a compositional bias: basic residues. The disordered stretch occupies residues 1 to 108 (MPRGQASKRR…SSSESTGRDL (108 aa)). Low complexity-rich tracts occupy residues 39-54 (PSSSSPACQSPPQSFP) and 62-80 (SQRASYPSSPASAVSLTSS). Polar residues predominate over residues 90–103 (ESPNSFHGPSSSES). An MAGE domain is found at 109-336 (LNTKTGELVQ…RARASRSFQP (228 aa)).

The polypeptide is Melanoma-associated antigen B17 (MAGEB17) (Homo sapiens (Human)).